A 93-amino-acid chain; its full sequence is DNA-binding protein Fis (93 aa).

The H-T-H motif DNA-binding region spans 74–93 (QTRAAQMMGINRGTLRKKLK).

The protein belongs to the transcriptional regulatory Fis family. Homodimer.

In terms of biological role, activates ribosomal RNA transcription. Plays a direct role in upstream activation of rRNA promoters. In Proteus vulgaris, this protein is DNA-binding protein Fis.